We begin with the raw amino-acid sequence, 141 residues long: uncharacterized protein (141 aa).

The next 2 membrane-spanning stretches (helical) occupy residues 20-42 (FLVN…FCLA) and 52-74 (LHLC…IFTL).

The protein localises to the cell membrane. This is an uncharacterized protein from Archaeoglobus fulgidus (strain ATCC 49558 / DSM 4304 / JCM 9628 / NBRC 100126 / VC-16).